Here is a 199-residue protein sequence, read N- to C-terminus: 5'-deoxynucleotidase YfbR (199 aa).

Substrate-binding positions include 18–19 (RW) and H33. In terms of domain architecture, HD spans 30-142 (VSEHSLQVAM…VKQADALCAY (113 aa)). The a divalent metal cation site is built by H33, H68, and D69. Substrate contacts are provided by residues D69, 77–80 (DLPT), and D137. Position 137 (D137) interacts with a divalent metal cation.

It belongs to the 5DNU family. In terms of assembly, homodimer. A divalent metal cation is required as a cofactor.

Its subcellular location is the cytoplasm. The catalysed reaction is a 2'-deoxyribonucleoside 5'-phosphate + H2O = a 2'-deoxyribonucleoside + phosphate. Catalyzes the strictly specific dephosphorylation of 2'-deoxyribonucleoside 5'-monophosphates. The chain is 5'-deoxynucleotidase YfbR from Salmonella arizonae (strain ATCC BAA-731 / CDC346-86 / RSK2980).